The sequence spans 213 residues: Transmembrane protein 186 (213 aa).

Topologically, residues 1–79 are mitochondrial matrix; the sequence is MAALLRAVRR…FLSRLKLAQT (79 aa). Residues 80-100 traverse the membrane as a helical segment; that stretch reads ALTVVALPPGYYLYSQGLLTL. At 101-102 the chain is on the mitochondrial intermembrane side; it reads NT. A helical membrane pass occupies residues 103–123; that stretch reads VCLMSGISGFALTMLCWMSYF. Residues 124–213 lie on the Mitochondrial matrix side of the membrane; sequence LRRLVGILYL…QVFGVHQMLK (90 aa).

Belongs to the TMEM186 family. In terms of assembly, part of the mitochondrial complex I assembly/MCIA complex that comprises at least the core subunits TMEM126B, NDUFAF1, ECSIT and ACAD9 and complement subunits such as COA1 and TMEM186. Interacts with MT-ND3.

It is found in the mitochondrion inner membrane. Functionally, as part of the MCIA complex, required for efficient assembly of the mitochondrial complex I. The protein is Transmembrane protein 186 of Homo sapiens (Human).